The primary structure comprises 445 residues: 6-phosphogluconate dehydrogenase, decarboxylating (445 aa).

NADP(+) is bound by residues 1-4 (AVMG), 22-24 (NRS), 63-65 (VQA), and N91. Substrate contacts are provided by residues N91 and 117 to 119 (SGG). The active-site Proton acceptor is K172. 175–176 (HN) serves as a coordination point for substrate. E179 serves as the catalytic Proton donor. Substrate contacts are provided by Y180, K249, R276, R434, and H440.

The protein belongs to the 6-phosphogluconate dehydrogenase family. In terms of assembly, homodimer.

The catalysed reaction is 6-phospho-D-gluconate + NADP(+) = D-ribulose 5-phosphate + CO2 + NADPH. It participates in carbohydrate degradation; pentose phosphate pathway; D-ribulose 5-phosphate from D-glucose 6-phosphate (oxidative stage): step 3/3. Functionally, catalyzes the oxidative decarboxylation of 6-phosphogluconate to ribulose 5-phosphate and CO(2), with concomitant reduction of NADP to NADPH. In Pseudescherichia vulneris (Escherichia vulneris), this protein is 6-phosphogluconate dehydrogenase, decarboxylating (gnd).